The chain runs to 65 residues: Large ribosomal subunit protein bL35 (65 aa).

Belongs to the bacterial ribosomal protein bL35 family.

The polypeptide is Large ribosomal subunit protein bL35 (Parasynechococcus marenigrum (strain WH8102)).